A 432-amino-acid polypeptide reads, in one-letter code: Adenylosuccinate synthetase (432 aa).

Residues 13-19 (GDEGKGK) and 41-43 (GHT) each bind GTP. Asp14 serves as the catalytic Proton acceptor. 2 residues coordinate Mg(2+): Asp14 and Gly41. Residues 14 to 17 (DEGK), 39 to 42 (NAGH), Thr130, Arg144, Gln225, Thr240, and Arg304 contribute to the IMP site. The active-site Proton donor is the His42. 300–306 (STTGRRR) contacts substrate. Residues Arg306, 332 to 334 (KID), and 415 to 417 (STG) each bind GTP.

The protein belongs to the adenylosuccinate synthetase family. Homodimer. Requires Mg(2+) as cofactor.

It localises to the cytoplasm. The enzyme catalyses IMP + L-aspartate + GTP = N(6)-(1,2-dicarboxyethyl)-AMP + GDP + phosphate + 2 H(+). The protein operates within purine metabolism; AMP biosynthesis via de novo pathway; AMP from IMP: step 1/2. Its function is as follows. Plays an important role in the de novo pathway of purine nucleotide biosynthesis. Catalyzes the first committed step in the biosynthesis of AMP from IMP. The protein is Adenylosuccinate synthetase of Blochmanniella pennsylvanica (strain BPEN).